Consider the following 149-residue polypeptide: Pleckstrin homology domain-containing family J member 1 (149 aa).

The 94-residue stretch at 15 to 108 folds into the PH domain; the sequence is RAEKAAELSM…WVEALTNASY (94 aa).

This Xenopus tropicalis (Western clawed frog) protein is Pleckstrin homology domain-containing family J member 1 (plekhj1).